We begin with the raw amino-acid sequence, 339 residues long: UDP-3-O-acylglucosamine N-acyltransferase (339 aa).

H238 functions as the Proton acceptor in the catalytic mechanism.

Belongs to the transferase hexapeptide repeat family. LpxD subfamily. As to quaternary structure, homotrimer.

It carries out the reaction a UDP-3-O-[(3R)-3-hydroxyacyl]-alpha-D-glucosamine + a (3R)-hydroxyacyl-[ACP] = a UDP-2-N,3-O-bis[(3R)-3-hydroxyacyl]-alpha-D-glucosamine + holo-[ACP] + H(+). It participates in bacterial outer membrane biogenesis; LPS lipid A biosynthesis. In terms of biological role, catalyzes the N-acylation of UDP-3-O-acylglucosamine using 3-hydroxyacyl-ACP as the acyl donor. Is involved in the biosynthesis of lipid A, a phosphorylated glycolipid that anchors the lipopolysaccharide to the outer membrane of the cell. This Aeromonas hydrophila subsp. hydrophila (strain ATCC 7966 / DSM 30187 / BCRC 13018 / CCUG 14551 / JCM 1027 / KCTC 2358 / NCIMB 9240 / NCTC 8049) protein is UDP-3-O-acylglucosamine N-acyltransferase.